The chain runs to 742 residues: Pyriculol/pyriculariol biosynthesis cluster transcription factor 1 (742 aa).

The segment at residues 23–49 (CVLCQHRKIKCDRSFPCANCQRANVQC) is a DNA-binding region (zn(2)-C6 fungal-type). The tract at residues 85–116 (GKPDIARLTTKRSSLSQSPPKGEEPLPEWNRH) is disordered. Positions 105 to 116 (KGEEPLPEWNRH) are enriched in basic and acidic residues.

It is found in the nucleus. Transcriptional regulator; part of the gene cluster that mediates the biosynthesis of pyriculol and pyriculariol, two heptaketides that induce lesion formation upon application on rice leaves but are dispensable for pathogenicity. With TRF2, negatively regulates the expression of the gene cluster and the subsequent pyriculol and pyriculariol production. In Pyricularia oryzae (strain 70-15 / ATCC MYA-4617 / FGSC 8958) (Rice blast fungus), this protein is Pyriculol/pyriculariol biosynthesis cluster transcription factor 1.